The sequence spans 144 residues: Large ribosomal subunit protein uL11 (144 aa).

It belongs to the universal ribosomal protein uL11 family. In terms of assembly, part of the ribosomal stalk of the 50S ribosomal subunit. Interacts with L10 and the large rRNA to form the base of the stalk. L10 forms an elongated spine to which L12 dimers bind in a sequential fashion forming a multimeric L10(L12)X complex. One or more lysine residues are methylated.

Forms part of the ribosomal stalk which helps the ribosome interact with GTP-bound translation factors. In Corynebacterium efficiens (strain DSM 44549 / YS-314 / AJ 12310 / JCM 11189 / NBRC 100395), this protein is Large ribosomal subunit protein uL11.